Here is a 635-residue protein sequence, read N- to C-terminus: MAKKSAENGIYSVSGDEKKGPLIAPGPDGAPAKGDGPAGLGAPGGCLAVPPRETWTRQMDFIMSCVGFAVGLGNVWRFPYLCYKNGGGVFLIPYVLIALVGGIPIFFLEISLGQFMKAGSINVWNICPLFKGLGYASMVIVFYCNTYYIMVLAWGFYYLVKSFTTTLPWATCGHTWNTPDCVEIFRHEDCANGSLANLTCDQLAERRSPVIEFWENKVLRLSGGLEVPGALNSEVTLCLLACWVLVYFCVWKGVKSTGKIVYFTATFPYVVLVVLLVRGVLLPGALDGIIYYLKPDWSKLRSPQVWIDAGTQIFFSYAIGLGALTALGSYNRFNNNCYKDAIILALINSGTSFFAGFVVFSILGFMATEQGVHISKVAESGPGLAFIAYPRAVTLMPVAPLWAALFFFMLLLLGLDSQFVGVEGFITGLLDLLPASYYFRFQREISVALCCALCFVIDLSMVQMAGMYVFQLFDYYSASGTTLLWQAFWECVAVAWVYGADRFMDDIACMIGYRPCPWMKWCWSFFTPLVCMGIFIFNIVYYKPLVYNKTYVYPWWGEAMGWAFALSSMLCVPLHLLGCLLRAKGTMAERWQHLTQPVWGLHHLEYRAQDADVRGLTTLTPVSESSKVVVVESVM.

A disordered region spans residues 1 to 35 (MAKKSAENGIYSVSGDEKKGPLIAPGPDGAPAKGD). Topologically, residues 1–60 (MAKKSAENGIYSVSGDEKKGPLIAPGPDGAPAKGDGPAGLGAPGGCLAVPPRETWTRQMD) are cytoplasmic. The span at 25 to 35 (PGPDGAPAKGD) shows a compositional bias: low complexity. Residues 61-81 (FIMSCVGFAVGLGNVWRFPYL) traverse the membrane as a helical segment. Residues 82-87 (CYKNGG) are Extracellular-facing. Residues 88–108 (GVFLIPYVLIALVGGIPIFFL) traverse the membrane as a helical segment. The Cytoplasmic portion of the chain corresponds to 109–138 (EISLGQFMKAGSINVWNICPLFKGLGYASM). The chain crosses the membrane as a helical span at residues 139–159 (VIVFYCNTYYIMVLAWGFYYL). The Extracellular segment spans residues 160 to 230 (VKSFTTTLPW…LSGGLEVPGA (71 aa)). N-linked (GlcNAc...) asparagine glycosylation is found at Asn-192 and Asn-197. A helical membrane pass occupies residues 231–251 (LNSEVTLCLLACWVLVYFCVW). The Cytoplasmic segment spans residues 252 to 269 (KGVKSTGKIVYFTATFPY). The helical transmembrane segment at 270–290 (VVLVVLLVRGVLLPGALDGII) threads the bilayer. Topologically, residues 291–304 (YYLKPDWSKLRSPQ) are extracellular. The helical transmembrane segment at 305–325 (VWIDAGTQIFFSYAIGLGALT) threads the bilayer. Residues 326–341 (ALGSYNRFNNNCYKDA) are Cytoplasmic-facing. Residues 342–362 (IILALINSGTSFFAGFVVFSI) form a helical membrane-spanning segment. Residues 363 to 394 (LGFMATEQGVHISKVAESGPGLAFIAYPRAVT) are Extracellular-facing. The chain crosses the membrane as a helical span at residues 395 to 415 (LMPVAPLWAALFFFMLLLLGL). At 416 to 444 (DSQFVGVEGFITGLLDLLPASYYFRFQRE) the chain is on the cytoplasmic side. A helical membrane pass occupies residues 445-465 (ISVALCCALCFVIDLSMVQMA). Residues 466–479 (GMYVFQLFDYYSAS) lie on the Extracellular side of the membrane. A helical membrane pass occupies residues 480–500 (GTTLLWQAFWECVAVAWVYGA). Residues 501–520 (DRFMDDIACMIGYRPCPWMK) lie on the Cytoplasmic side of the membrane. The chain crosses the membrane as a helical span at residues 521 to 541 (WCWSFFTPLVCMGIFIFNIVY). The Extracellular portion of the chain corresponds to 542 to 560 (YKPLVYNKTYVYPWWGEAM). N-linked (GlcNAc...) asparagine glycosylation occurs at Asn-548. A helical membrane pass occupies residues 561–581 (GWAFALSSMLCVPLHLLGCLL). Over 582–635 (RAKGTMAERWQHLTQPVWGLHHLEYRAQDADVRGLTTLTPVSESSKVVVVESVM) the chain is Cytoplasmic. A phosphothreonine mark is found at Thr-617 and Thr-620. Ser-623 carries the post-translational modification Phosphoserine.

It belongs to the sodium:neurotransmitter symporter (SNF) (TC 2.A.22) family. SLC6A8 subfamily. In terms of processing, glycosylated. Prominent in kidney, heart, and muscle, also present in brain, but not in liver and intestine.

The protein resides in the cell membrane. Its subcellular location is the apical cell membrane. The enzyme catalyses creatine(out) + chloride(out) + 2 Na(+)(out) = creatine(in) + chloride(in) + 2 Na(+)(in). Functionally, creatine:sodium symporter which mediates the uptake of creatine. Plays an important role in supplying creatine to the brain via the blood-brain barrier. The polypeptide is Sodium- and chloride-dependent creatine transporter 1 (SLC6A8) (Oryctolagus cuniculus (Rabbit)).